A 381-amino-acid chain; its full sequence is Queuine tRNA-ribosyltransferase (381 aa).

Catalysis depends on Asp-92, which acts as the Proton acceptor. Residues 92-96 (DSGGF), Asp-146, Gln-190, and Gly-217 contribute to the substrate site. The tract at residues 248–254 (GVGRPED) is RNA binding. Asp-267 acts as the Nucleophile in catalysis. An RNA binding; important for wobble base 34 recognition region spans residues 272–276 (TRNAR). Zn(2+) contacts are provided by Cys-305, Cys-307, Cys-310, and His-337.

Belongs to the queuine tRNA-ribosyltransferase family. As to quaternary structure, homodimer. Within each dimer, one monomer is responsible for RNA recognition and catalysis, while the other monomer binds to the replacement base PreQ1. Zn(2+) is required as a cofactor.

The catalysed reaction is 7-aminomethyl-7-carbaguanine + guanosine(34) in tRNA = 7-aminomethyl-7-carbaguanosine(34) in tRNA + guanine. It functions in the pathway tRNA modification; tRNA-queuosine biosynthesis. Catalyzes the base-exchange of a guanine (G) residue with the queuine precursor 7-aminomethyl-7-deazaguanine (PreQ1) at position 34 (anticodon wobble position) in tRNAs with GU(N) anticodons (tRNA-Asp, -Asn, -His and -Tyr). Catalysis occurs through a double-displacement mechanism. The nucleophile active site attacks the C1' of nucleotide 34 to detach the guanine base from the RNA, forming a covalent enzyme-RNA intermediate. The proton acceptor active site deprotonates the incoming PreQ1, allowing a nucleophilic attack on the C1' of the ribose to form the product. After dissociation, two additional enzymatic reactions on the tRNA convert PreQ1 to queuine (Q), resulting in the hypermodified nucleoside queuosine (7-(((4,5-cis-dihydroxy-2-cyclopenten-1-yl)amino)methyl)-7-deazaguanosine). This is Queuine tRNA-ribosyltransferase from Xanthomonas campestris pv. campestris (strain 8004).